Here is an 86-residue protein sequence, read N- to C-terminus: Large ribosomal subunit protein bL27 (86 aa).

This sequence belongs to the bacterial ribosomal protein bL27 family.

This chain is Large ribosomal subunit protein bL27, found in Xanthomonas axonopodis pv. citri (strain 306).